The following is a 559-amino-acid chain: NAD(P)H-quinone oxidoreductase chain 4-2 (559 aa).

Helical transmembrane passes span 5–25 (FPWL…IPLI), 35–55 (WYAL…FWTN), 86–106 (ISMP…FAAW), 114–134 (LFYF…VAQD), 136–156 (LLLF…VCIW), 168–188 (FLLY…GLAF), 207–227 (IALE…KLAI), 242–262 (SAPV…YGLI), 274–294 (VYFA…GGFS), 310–330 (VSHM…GISG), 331–351 (AMLQ…LAGV), 374–394 (VFAL…MSGF), 417–437 (VTVF…LSML), and 488–508 (VFIA…PKLA).

It belongs to the complex I subunit 4 family.

Its subcellular location is the cellular thylakoid membrane. The enzyme catalyses a plastoquinone + NADH + (n+1) H(+)(in) = a plastoquinol + NAD(+) + n H(+)(out). The catalysed reaction is a plastoquinone + NADPH + (n+1) H(+)(in) = a plastoquinol + NADP(+) + n H(+)(out). Its function is as follows. NDH-1 shuttles electrons from NAD(P)H, via FMN and iron-sulfur (Fe-S) centers, to quinones in the respiratory chain. The immediate electron acceptor for the enzyme in this species is believed to be plastoquinone. Couples the redox reaction to proton translocation (for every two electrons transferred, four hydrogen ions are translocated across the cytoplasmic membrane), and thus conserves the redox energy in a proton gradient. The chain is NAD(P)H-quinone oxidoreductase chain 4-2 (ndhD2) from Synechocystis sp. (strain ATCC 27184 / PCC 6803 / Kazusa).